We begin with the raw amino-acid sequence, 806 residues long: Transitional endoplasmic reticulum ATPase (806 aa).

N-acetylalanine is present on A2. S3 and S7 each carry phosphoserine. A Glycyl lysine isopeptide (Lys-Gly) (interchain with G-Cter in SUMO2) cross-link involves residue K8. S13 is modified (phosphoserine). K18 participates in a covalent cross-link: Glycyl lysine isopeptide (Lys-Gly) (interchain with G-Cter in SUMO2). S37 carries the phosphoserine modification. 247-253 (PGTGKTL) contacts ATP. Position 315 is an N6,N6,N6-trimethyllysine; by VCPKMT (K315). Residues N348 and H384 each contribute to the ATP site. T436 is subject to Phosphothreonine. Position 462 is a phosphoserine (S462). An N6-acetyllysine mark is found at K502 and K505. 521-526 (GCGKTL) contributes to the ATP binding site. K668 bears the N6-acetyllysine; alternate mark. K668 is modified (N6-succinyllysine; alternate). S702 is modified (phosphoserine). Positions 708–727 (RRERERQTNPSAMEVEEDDP) are disordered. An N6-acetyllysine modification is found at K754. Residues 768–806 (FGSFRFPSGNQGGAGPSQGSGGGTGGNVYTEDNDDDLYG) form a disordered region. Phosphoserine occurs at positions 770, 775, and 787. A compositionally biased stretch (gly residues) spans 777-793 (NQGGAGPSQGSGGGTGG). Positions 797 to 806 (TEDNDDDLYG) are interaction with UBXN6. The PIM motif motif lies at 802 to 806 (DDLYG). Y805 is subject to Phosphotyrosine.

This sequence belongs to the AAA ATPase family. In terms of assembly, homohexamer. Forms a ring-shaped particle of 12.5 nm diameter, that displays 6-fold radial symmetry. Part of a ternary complex containing STX5A, NSFL1C and VCP. NSFL1C forms a homotrimer that binds to one end of a VCP homohexamer. The complex binds to membranes enriched in phosphatidylethanolamine-containing lipids and promotes Golgi membrane fusion. Binds to a heterodimer of NPLOC4 and UFD1, binding to this heterodimer inhibits Golgi-membrane fusion. Interaction with VCIP135 leads to dissociation of the complex via ATP hydrolysis by VCP. Part of a ternary complex containing NPLOC4, UFD1 and VCP. Interacts with NSFL1C-like protein p37; the complex has membrane fusion activity and is required for Golgi and endoplasmic reticulum biogenesis. Interacts with SELENOS and SYVN1, as well as with DERL1 (via SHP-box motif), DERL2 and DERL3; which probably transfer misfolded proteins from the ER to VCP. Interacts with SVIP and DERL1. Component of a complex required to couple retrotranslocation, ubiquitination and deglycosylation composed of NGLY1, SAKS1, AMFR, VCP and RAD23B. Part of a complex composed of STUB1/CHIP, VCP/p97, CHRNA3, and UBXN2A that modulates the ubiquitination and endoplasmic reticulum-associated degradation (ERAD) of CHRNA3. Within the complex UBXN2A acts as a scaffold protein required for the interaction of CHRNA3 with VCP/p97, this interaction also inhibits CHRNA3 ubiquitination by STUB1/CHIP and subsequently ERAD. Interacts with UBXN2A (via UBX domain); the interaction is required for the interaction of CHRNA3 in the STUB1-VCP-UBXN2A complex. Directly interacts with UBXN4 and RNF19A. Interacts with CASR. Interacts with UBE4B and YOD1. Interacts with clathrin. Interacts with RNF103. Interacts with TRIM13 and TRIM21. Component of a VCP/p97-AMFR/gp78 complex that participates in the final step of the endoplasmic reticulum-associated degradation (ERAD) of HMGCR. Interacts directly with AMFR/gp78 (via its VIM). Interacts with RHBDD1 (via C-terminal domain). Interacts with SPRTN; leading to recruitment to stalled replication forks. Interacts with WASHC5. Interacts with UBOX5. Interacts (via N-terminus) with UBXN7, UBXN8, and probably several other UBX domain-containing proteins (via UBX domains); the interactions are mutually exclusive with VIM-dependent interactions such as those with AMFR and SELENOS. Forms a complex with UBQLN1 and UBXN4. Interacts (via the PIM motif) with RNF31 (via the PUB domain). Interacts with RIGI and RNF125; interaction takes place when RIGI is ubiquitinated via 'Lys-63'-linked ubiquitin on its CARD domains, leading to recruit RNF125 and promote ubiquitination and degradation of RIGI. Interacts with BAG6. Interacts with UBXN10. Interacts with UBXN6; the interaction with UBXN6 is direct and competitive with UFD1. Forms a ternary complex with CAV1 and UBXN6. Interacts with PLAA, UBXN6 and YOD1; may form a complex involved in macroautophagy. Interacts with ANKZF1. Interacts with ubiquitin-binding protein FAF1. Interacts with ZFAND2B (via VIM motif); the interaction is direct. Interacts with ZFAND1 (via its ubiquitin-like region); this interaction occurs in an arsenite-dependent manner. Interacts with CCDC47. Interacts with LMBR1L and UBAC2. Interacts with ATXN3. Interacts with TEX264; bridging VCP to covalent DNA-protein cross-links (DPCs). Post-translationally, ISGylated. Methylation at Lys-315 catalyzed by VCPKMT is increased in the presence of ASPSCR1. Lys-315 methylation may decrease ATPase activity. In terms of processing, phosphorylated by tyrosine kinases in response to T-cell antigen receptor activation. Phosphorylated in mitotic cells.

The protein resides in the cytoplasm. It is found in the cytosol. Its subcellular location is the endoplasmic reticulum. The protein localises to the nucleus. It localises to the stress granule. The catalysed reaction is ATP + H2O = ADP + phosphate + H(+). In terms of biological role, necessary for the fragmentation of Golgi stacks during mitosis and for their reassembly after mitosis. Involved in the formation of the transitional endoplasmic reticulum (tER). The transfer of membranes from the endoplasmic reticulum to the Golgi apparatus occurs via 50-70 nm transition vesicles which derive from part-rough, part-smooth transitional elements of the endoplasmic reticulum (tER). Vesicle budding from the tER is an ATP-dependent process. The ternary complex containing UFD1, VCP and NPLOC4 binds ubiquitinated proteins and is necessary for the export of misfolded proteins from the ER to the cytoplasm, where they are degraded by the proteasome. The NPLOC4-UFD1-VCP complex regulates spindle disassembly at the end of mitosis and is necessary for the formation of a closed nuclear envelope. Regulates E3 ubiquitin-protein ligase activity of RNF19A. Component of the VCP/p97-AMFR/gp78 complex that participates in the final step of the sterol-mediated ubiquitination and endoplasmic reticulum-associated degradation (ERAD) of HMGCR. Mediates the endoplasmic reticulum-associated degradation of CHRNA3 in cortical neurons as part of the STUB1-VCP-UBXN2A complex. Involved in endoplasmic reticulum stress-induced pre-emptive quality control, a mechanism that selectively attenuates the translocation of newly synthesized proteins into the endoplasmic reticulum and reroutes them to the cytosol for proteasomal degradation. Involved in clearance process by mediating G3BP1 extraction from stress granules. Also involved in DNA damage response: recruited to double-strand breaks (DSBs) sites in a RNF8- and RNF168-dependent manner and promotes the recruitment of TP53BP1 at DNA damage sites. Recruited to stalled replication forks by SPRTN: may act by mediating extraction of DNA polymerase eta (POLH) to prevent excessive translesion DNA synthesis and limit the incidence of mutations induced by DNA damage. Together with SPRTN metalloprotease, involved in the repair of covalent DNA-protein cross-links (DPCs) during DNA synthesis. Involved in interstrand cross-link repair in response to replication stress by mediating unloading of the ubiquitinated CMG helicase complex. Mediates extraction of PARP1 trapped to chromatin: recognizes and binds ubiquitinated PARP1 and promotes its removal. Required for cytoplasmic retrotranslocation of stressed/damaged mitochondrial outer-membrane proteins and their subsequent proteasomal degradation. Essential for the maturation of ubiquitin-containing autophagosomes and the clearance of ubiquitinated protein by autophagy. Acts as a negative regulator of type I interferon production by interacting with RIGI: interaction takes place when RIGI is ubiquitinated via 'Lys-63'-linked ubiquitin on its CARD domains, leading to recruit RNF125 and promote ubiquitination and degradation of RIGI. May play a role in the ubiquitin-dependent sorting of membrane proteins to lysosomes where they undergo degradation. May more particularly play a role in caveolins sorting in cells. By controlling the steady-state expression of the IGF1R receptor, indirectly regulates the insulin-like growth factor receptor signaling pathway. In Bos taurus (Bovine), this protein is Transitional endoplasmic reticulum ATPase (VCP).